We begin with the raw amino-acid sequence, 248 residues long: Large ribosomal subunit protein uL30B (248 aa).

A disordered region spans residues 1-45; it reads MSQKKQKIQVEQKVPENVAKKTQRDSKLRDAVAKRRTERLAANKT. The segment covering 8 to 41 has biased composition (basic and acidic residues); that stretch reads IQVEQKVPENVAKKTQRDSKLRDAVAKRRTERLA.

This sequence belongs to the universal ribosomal protein uL30 family.

Functionally, binds to G-rich structures in 28S rRNA and in mRNAs. Plays a regulatory role in the translation apparatus; inhibits cell-free translation of mRNAs. This Paramecium tetraurelia protein is Large ribosomal subunit protein uL30B (Rpl7-2).